A 107-amino-acid polypeptide reads, in one-letter code: uncharacterized protein (107 aa).

The Glutaredoxin domain occupies 6-107; it reads KKVIEQILDN…QAQVETLLAA (102 aa). Residue Lys-23 participates in glutathione binding. Cys-31 provides a ligand contact to [2Fe-2S] cluster. Glutathione-binding positions include Arg-60 and 85-86; that span reads AD.

Belongs to the glutaredoxin family. Monothiol subfamily.

Its subcellular location is the plastid. The protein resides in the chloroplast. This is an uncharacterized protein from Porphyra purpurea (Red seaweed).